Here is a 267-residue protein sequence, read N- to C-terminus: L-aspartate dehydrogenase (267 aa).

NAD(+)-binding residues include Ala-124 and Asn-190. His-220 is a catalytic residue.

It belongs to the L-aspartate dehydrogenase family.

The enzyme catalyses L-aspartate + NADP(+) + H2O = oxaloacetate + NH4(+) + NADPH + H(+). It carries out the reaction L-aspartate + NAD(+) + H2O = oxaloacetate + NH4(+) + NADH + H(+). It functions in the pathway cofactor biosynthesis; NAD(+) biosynthesis; iminoaspartate from L-aspartate (dehydrogenase route): step 1/1. Specifically catalyzes the NAD or NADP-dependent dehydrogenation of L-aspartate to iminoaspartate. This is L-aspartate dehydrogenase from Pseudomonas aeruginosa (strain ATCC 15692 / DSM 22644 / CIP 104116 / JCM 14847 / LMG 12228 / 1C / PRS 101 / PAO1).